The sequence spans 196 residues: MNMDIFDNDLSIPVNLIRQWCFCPRIVYYQELLAIKPNKPLWVAQGEEFHKKVEQLEKRRSFSRYGLENAIRHFNLSIKSQKYKLHGIVDWVIETDTNVYVVEYKTNPNPNSLGHKLQIAAYALLVQEYFAKPCKTTFLTSDKKSYEIKITDELINKLIKTISDILSTLDSGNKPDSSASDHQCIQCEYYNFCNDR.

Position 23 (cysteine 23) interacts with [4Fe-4S] cluster. The Mn(2+) site is built by histidine 50, aspartate 90, and glutamate 103. [4Fe-4S] cluster-binding residues include cysteine 184, cysteine 187, and cysteine 193.

This sequence belongs to the CRISPR-associated exonuclease Cas4 family. Mg(2+) serves as cofactor. The cofactor is [4Fe-4S] cluster.

It catalyses the reaction exonucleolytic cleavage in the 5'- to 3'-direction to yield nucleoside 3'-phosphates.. CRISPR (clustered regularly interspaced short palindromic repeat) is an adaptive immune system that provides protection against mobile genetic elements (viruses, transposable elements and conjugative plasmids). CRISPR clusters contain sequences complementary to antecedent mobile elements and target invading nucleic acids. CRISPR clusters are transcribed and processed into CRISPR RNA (crRNA). This may be a 5' to 3' ssDNA exonuclease. In Francisella tularensis subsp. novicida (strain U112), this protein is CRISPR-associated exonuclease Cas4.